The primary structure comprises 184 residues: Probable N-acetyltransferase san (184 aa).

Residues 6-155 (IELGDVTPHN…DAHVLQKTLR (150 aa)) form the N-acetyltransferase domain. Position 31 (Tyr-31) interacts with substrate. N6-acetyllysine; by autocatalysis is present on Lys-47. Tyr-73 is a catalytic residue. Residue Met-75 participates in substrate binding. 77–90 (LGCLSPYRRLGIGT) contributes to the acetyl-CoA binding site. His-112 is an active-site residue. 117-126 (NNGAIEFYKK) contributes to the CoA binding site. Residues 138 to 141 (YYKR) form a substrate region. Residues 157-174 (TAPNSNSTATSTTANSNS) are compositionally biased toward low complexity. Positions 157–176 (TAPNSNSTATSTTANSNSRS) are disordered.

It belongs to the acetyltransferase family. Component of an acetyltransferase complex, at least composed of san, Ard1 and Nat1. Autoacetylated.

Its subcellular location is the cytoplasm. It carries out the reaction N-terminal L-methionyl-L-alanyl-[protein] + acetyl-CoA = N-terminal N(alpha)-acetyl-L-methionyl-L-alanyl-[protein] + CoA + H(+). It catalyses the reaction N-terminal L-methionyl-L-seryl-[protein] + acetyl-CoA = N-terminal N(alpha)-acetyl-L-methionyl-L-seryl-[protein] + CoA + H(+). The enzyme catalyses N-terminal L-methionyl-L-valyl-[protein] + acetyl-CoA = N-terminal N(alpha)-acetyl-L-methionyl-L-valyl-[protein] + CoA + H(+). The catalysed reaction is N-terminal L-methionyl-L-threonyl-[protein] + acetyl-CoA = N-terminal N(alpha)-acetyl-L-methionyl-L-threonyl-[protein] + CoA + H(+). It carries out the reaction N-terminal L-methionyl-L-lysyl-[protein] + acetyl-CoA = N-terminal N(alpha)-acetyl-L-methionyl-L-lysyl-[protein] + CoA + H(+). It catalyses the reaction N-terminal L-methionyl-L-leucyl-[protein] + acetyl-CoA = N-terminal N(alpha)-acetyl-L-methionyl-L-leucyl-[protein] + CoA + H(+). The enzyme catalyses N-terminal L-methionyl-L-phenylalanyl-[protein] + acetyl-CoA = N-terminal N(alpha)-acetyl-L-methionyl-L-phenylalanyl-[protein] + CoA + H(+). The catalysed reaction is N-terminal L-methionyl-L-tyrosyl-[protein] + acetyl-CoA = N-terminal N(alpha)-acetyl-L-methionyl-L-tyrosyl-[protein] + CoA + H(+). In terms of biological role, N-alpha-acetyltransferase that acetylates the N-terminus of proteins that retain their initiating methionine. Has a broad substrate specificity: able to acetylate the initiator methionine of most peptides. Also displays N-epsilon-acetyltransferase activity by mediating acetylation of the side chain of specific lysines on proteins. Autoacetylates. Required for the establishment of sister chromatid cohesion and couple the processes of cohesion and DNA replication to ensure that only sister chromatids become paired together. Required for the interaction between Scc1/vtd and SMC3, possibly by mediating N-terminal acetylation of Scc1/vtd. Its function is as follows. (Microbial infection) Required for optimal replication of E.chaffeensis in the immune tissues, hemocytes, and fat body. This Drosophila melanogaster (Fruit fly) protein is Probable N-acetyltransferase san (san).